Consider the following 703-residue polypeptide: Elongation factor G 1 (703 aa).

In terms of domain architecture, tr-type G spans 8-291 (ERYRNIGISA…AVIDYLPSPV (284 aa)). GTP-binding positions include 17 to 24 (AHIDAGKT), 88 to 92 (DTPGH), and 142 to 145 (NKMD).

It belongs to the TRAFAC class translation factor GTPase superfamily. Classic translation factor GTPase family. EF-G/EF-2 subfamily.

The protein resides in the cytoplasm. Catalyzes the GTP-dependent ribosomal translocation step during translation elongation. During this step, the ribosome changes from the pre-translocational (PRE) to the post-translocational (POST) state as the newly formed A-site-bound peptidyl-tRNA and P-site-bound deacylated tRNA move to the P and E sites, respectively. Catalyzes the coordinated movement of the two tRNA molecules, the mRNA and conformational changes in the ribosome. This Burkholderia orbicola (strain AU 1054) protein is Elongation factor G 1.